Reading from the N-terminus, the 683-residue chain is MDVCARLALWLLWGLLLHHGQSLSQSHSEKATGSGANSEESTAAEFCRIDKPLCHSEDEKLSFDAVRSIHKLMDDDANGDVDVEESDEFLREDLNYHDPTVKHSTFHGEDKLISVEDLWKAWKSSEVYNWTVDEVVQWLITYVELPQYEETFRKLQLSGHAMPRLAVTNTTMTGTVLKMTDRSHRQKLQLKALDTVLFGPPLLTRHNHLKDFMLVVSIVIGVGGCWFAYIQNRYSKEHMKKMMKDLEGLHRAEQSLHDLQERLHKAQEEHRTVEVEKVHLEKKLRDEINLAKQEAQRLKELREGTENERSRQKYAEEELEQVREALRKAEKELESHSSWYAPEALQKWLQLTHEVEVQYYNIKKQNAEKQLLVAKEGAEKIKKKRNTLFGTFHVAHSSSLDDVDHKILTAKQALSEVTAALRERLHRWQQIEILCGFQIVNNPGIHSLVAALNIDPSWMGSTRPNPAHFIMTDDVDDMDEEIVSPLSMQSPSLQSSVRQRLTEPQHGLGSQRDLTHSDSESSLHMSDRQRLAPKPPQMIRAADEALSAMTSNGSHRLIEGAHPGSLVEKLPDSPALAKKALLALNHGLDKAHSLMELSSPALPSGSPHLDSSRSHSPSPPDPDTPSPAGDSRALQASRNTRIPHLAGKKAAAEEDNGSIGEETDSSPGRKKFPLKIFKKPLKK.

The N-terminal stretch at Met1–Ser22 is a signal peptide. Topologically, residues Leu23 to Asp211 are extracellular. EF-hand domains lie at Ser62–Asn95 and Thr100–Ser124. Ca(2+) is bound by residues Asp74, Asp76, Asn78, Asp80, and Glu85. N-linked (GlcNAc...) asparagine glycosylation is found at Asn129 and Asn169. The SAM domain maps to Trp130–Phe198. A helical membrane pass occupies residues Phe212 to Asn232. Residues Arg233 to Lys683 are Cytoplasmic-facing. The stretch at Leu246–Val440 forms a coiled coil. Position 255 is a phosphoserine (Ser255). The interval Pro342–Val440 is SOAR/CAD. The tract at residues Asp473 to Glu481 is contributes to fast Ca(2+)-dependent inactivation of CRAC channels. A compositionally biased stretch (low complexity) spans Met488–Val497. Positions Met488 to Pro535 are disordered. Residue Thr502 is modified to Phosphothreonine. Ser510 carries the phosphoserine modification. Basic and acidic residues predominate over residues Asp513–Arg530. The residue at position 515 (Thr515) is a Phosphothreonine. Residues Ser517, Ser519, Ser521, Ser522, Ser565, Ser573, Ser606, Ser616, and Ser626 each carry the phosphoserine modification. Residues Leu597–Lys683 are disordered. Positions Thr640–Pro643 match the Microtubule tip localization signal motif. Acidic residues predominate over residues Glu653 to Asp664. Phosphoserine is present on Ser658. Position 663 is a phosphothreonine (Thr663). At Ser666 the chain carries Phosphoserine. A compositionally biased stretch (basic residues) spans Gly668–Lys683. The tract at residues Lys670 to Lys683 is required for generation of inwardly rectifying CRAC currents.

Monomer in the presence of Ca(2+). It oligomerizes in absence of Ca(2+). Forms homooligomers and heterooligomers with STIM2. Interacts with pore-forming subunits of CRAC channels, ORAI1, ORAI2 and ORAI3; this interaction is potentiated upon Ca(2+) store depletion. Interacts (via the transmembrane region and the SOAR/CAD domain) with SPPL3; the interaction promotes the binding of STIM1 to ORAI1. Interacts with ORAI1. Interacts with MAPRE1; probably required for targeting to the growing microtubule plus ends. Interacts with CRACR2A/EFCAB4B; the interaction is direct and takes place in absence of Ca(2+). Forms a complex with CRACR2A/EFCAB4B and ORAI1 at low concentration of Ca(2+), the complex dissociates at elevated Ca(2+) concentrations. Interacts with SARAF, promoting a slow inactivation of STIM1-dependent SOCE activity, possibly by facilitating the deoligomerization of STIM1. Interacts with EFHB; the interaction takes place upon Ca(2+)-store depletion and inhibits the association with SARAF. Interacts with ASPH. Interacts with SLC35G1; intracellular Ca(2+)-dependent. May interact with ATP1A1, ATP2A2, ATP2B1, ATP2B4, KPNB1 and XPO1; through SLC35G1. Interacts with TMEM203. Interacts with STIMATE, promoting STIM1 conformational switch. Interacts with TMEM178A. Interacts with CASQ1 (via C-terminal end and preferentially with the monomeric form); this interaction increases in response to a depletion of intracellular calcium, decreases both STIM1 aggregation and clustering, interaction of STIM1 with ORAI1 and store-operated Ca(2+) entry (SOCE) activity. Glycosylation is required for cell surface expression. In terms of processing, phosphorylated predominantly on Ser residues.

It localises to the cell membrane. Its subcellular location is the endoplasmic reticulum membrane. It is found in the sarcoplasmic reticulum. The protein localises to the cytoplasm. The protein resides in the cytoskeleton. Acts as a Ca(2+) sensor that gates two major inward rectifying Ca(2+) channels at the plasma membrane: Ca(2+) release-activated Ca(2+) (CRAC) channels and arachidonate-regulated Ca(2+)-selective (ARC) channels. Plays a role in mediating store-operated Ca(2+) entry (SOCE), a Ca(2+) influx following depletion of intracellular Ca(2+) stores. Upon Ca(2+) depletion, translocates from the endoplasmic reticulum to the plasma membrane where it activates CRAC channel pore-forming subunits ORA1, ORA2 and ORAI3 to generate sustained and oscillatory Ca(2+) entry. Involved in enamel formation. This chain is Stromal interaction molecule 1 (STIM1), found in Bos taurus (Bovine).